The primary structure comprises 100 residues: Small ribosomal subunit protein uS14c (100 aa).

Belongs to the universal ribosomal protein uS14 family. Part of the 30S ribosomal subunit.

It localises to the plastid. It is found in the chloroplast. Its function is as follows. Binds 16S rRNA, required for the assembly of 30S particles. The sequence is that of Small ribosomal subunit protein uS14c from Aethionema grandiflorum (Persian stone-cress).